The chain runs to 423 residues: Kynurenine--oxoglutarate transaminase 1 (423 aa).

Glycine 36 provides a ligand contact to substrate. The residue at position 82 (lysine 82) is an N6-succinyllysine. Asparagine 185 is a binding site for substrate. At lysine 247 the chain carries N6-(pyridoxal phosphate)lysine. Arginine 398 contacts substrate.

Belongs to the class-I pyridoxal-phosphate-dependent aminotransferase family. In terms of assembly, homodimer. It depends on pyridoxal 5'-phosphate as a cofactor. In terms of tissue distribution, detected in kidney.

Its subcellular location is the cytoplasm. The protein localises to the cytosol. It localises to the mitochondrion matrix. It catalyses the reaction L-kynurenine + 2-oxoglutarate = kynurenate + L-glutamate + H2O. The enzyme catalyses 3-phenylpyruvate + L-glutamine = 2-oxoglutaramate + L-phenylalanine. It carries out the reaction an S-substituted L-cysteine + H2O = a thiol + pyruvate + NH4(+). It participates in amino-acid degradation; L-kynurenine degradation; kynurenate from L-kynurenine: step 1/2. Its activity is regulated as follows. Inhibited by aminooxyacetate (in vitro). Functionally, catalyzes the irreversible transamination of the L-tryptophan metabolite L-kynurenine to form kynurenic acid (KA), an intermediate in the tryptophan catabolic pathway which is also a broad spectrum antagonist of the three ionotropic excitatory amino acid receptors among others. Metabolizes the cysteine conjugates of certain halogenated alkenes and alkanes to form reactive metabolites. Catalyzes the beta-elimination of S-conjugates and Se-conjugates of L-(seleno)cysteine, resulting in the cleavage of the C-S or C-Se bond. The sequence is that of Kynurenine--oxoglutarate transaminase 1 from Rattus norvegicus (Rat).